The following is a 215-amino-acid chain: Ribosomal RNA small subunit methyltransferase G (215 aa).

S-adenosyl-L-methionine contacts are provided by residues glycine 78, leucine 83, 128-129 (AE), and arginine 146.

It belongs to the methyltransferase superfamily. RNA methyltransferase RsmG family.

It localises to the cytoplasm. It catalyses the reaction guanosine(527) in 16S rRNA + S-adenosyl-L-methionine = N(7)-methylguanosine(527) in 16S rRNA + S-adenosyl-L-homocysteine. Functionally, specifically methylates the N7 position of guanine in position 527 of 16S rRNA. The sequence is that of Ribosomal RNA small subunit methyltransferase G from Anaeromyxobacter sp. (strain Fw109-5).